Consider the following 576-residue polypeptide: Rop guanine nucleotide exchange factor 13 (576 aa).

The region spanning 119–485 (KSCYFAYVTE…QLTQNPELAM (367 aa)) is the PRONE domain. The span at 557–570 (KTTYLESLGTTRSP) shows a compositional bias: polar residues. The interval 557–576 (KTTYLESLGTTRSPTAGRYS) is disordered.

As to quaternary structure, interacts with PRK6. In terms of tissue distribution, specifically expressed in mature flowers.

In terms of biological role, guanine-nucleotide exchange factor (GEF) that acts as an activator of Rop (Rho of plants) GTPases by promoting the exchange of GDP for GTP. The chain is Rop guanine nucleotide exchange factor 13 from Arabidopsis thaliana (Mouse-ear cress).